Reading from the N-terminus, the 376-residue chain is PqqA peptide cyclase (376 aa).

The region spanning 7–222 is the Radical SAM core domain; the sequence is VGLPLWLLAE…TNEYRDKLKA (216 aa). Positions 21, 25, and 28 each coordinate [4Fe-4S] cluster.

The protein belongs to the radical SAM superfamily. PqqE family. Interacts with PqqD. The interaction is necessary for activity of PqqE. It depends on [4Fe-4S] cluster as a cofactor.

The enzyme catalyses [PQQ precursor protein] + S-adenosyl-L-methionine = E-Y cross-linked-[PQQ precursor protein] + 5'-deoxyadenosine + L-methionine + H(+). The protein operates within cofactor biosynthesis; pyrroloquinoline quinone biosynthesis. Its function is as follows. Catalyzes the cross-linking of a glutamate residue and a tyrosine residue in the PqqA protein as part of the biosynthesis of pyrroloquinoline quinone (PQQ). This chain is PqqA peptide cyclase, found in Pseudomonas putida (strain ATCC 700007 / DSM 6899 / JCM 31910 / BCRC 17059 / LMG 24140 / F1).